The primary structure comprises 256 residues: Pimeloyl-[acyl-carrier protein] methyl ester esterase (256 aa).

Residues 15-242 form the AB hydrolase-1 domain; the sequence is HLVLLHGWGL…AAHAPFISHP (228 aa). Substrate-binding positions include Trp22, 82–83, and 143–147; these read SL and FLALQ. Ser82 serves as the catalytic Nucleophile. Catalysis depends on residues Asp207 and His235. His235 is a binding site for substrate.

This sequence belongs to the AB hydrolase superfamily. Carboxylesterase BioH family. In terms of assembly, monomer.

The protein localises to the cytoplasm. It catalyses the reaction 6-carboxyhexanoyl-[ACP] methyl ester + H2O = 6-carboxyhexanoyl-[ACP] + methanol + H(+). Its pathway is cofactor biosynthesis; biotin biosynthesis. The physiological role of BioH is to remove the methyl group introduced by BioC when the pimeloyl moiety is complete. It allows to synthesize pimeloyl-ACP via the fatty acid synthetic pathway through the hydrolysis of the ester bonds of pimeloyl-ACP esters. The protein is Pimeloyl-[acyl-carrier protein] methyl ester esterase of Salmonella dublin (strain CT_02021853).